The primary structure comprises 176 residues: NAD(P)H-quinone oxidoreductase subunit 6, chloroplastic (176 aa).

The next 5 membrane-spanning stretches (helical) occupy residues 10–30 (FLLVFLGLGLILGGLGVVLLP), 32–52 (PIYSAFSLGLVFVCISLFYIL), 61–81 (AQLLIYVGAINVLIIFAVMFI), 92–112 (LWTVGDGITSVVCTSLFVSLI), and 152–172 (FFLPFEFISIILLVALIGAIA).

The protein belongs to the complex I subunit 6 family. In terms of assembly, NDH is composed of at least 16 different subunits, 5 of which are encoded in the nucleus.

It localises to the plastid. It is found in the chloroplast thylakoid membrane. The catalysed reaction is a plastoquinone + NADH + (n+1) H(+)(in) = a plastoquinol + NAD(+) + n H(+)(out). It carries out the reaction a plastoquinone + NADPH + (n+1) H(+)(in) = a plastoquinol + NADP(+) + n H(+)(out). In terms of biological role, NDH shuttles electrons from NAD(P)H:plastoquinone, via FMN and iron-sulfur (Fe-S) centers, to quinones in the photosynthetic chain and possibly in a chloroplast respiratory chain. The immediate electron acceptor for the enzyme in this species is believed to be plastoquinone. Couples the redox reaction to proton translocation, and thus conserves the redox energy in a proton gradient. In Lactuca sativa (Garden lettuce), this protein is NAD(P)H-quinone oxidoreductase subunit 6, chloroplastic (ndhG).